Reading from the N-terminus, the 362-residue chain is 3-dehydroquinate synthase (362 aa).

Residues 71 to 76 (DGEQYK), 105 to 109 (GVVGD), 129 to 130 (TT), Lys142, Lys151, and 169 to 172 (CLKT) contribute to the NAD(+) site. 3 residues coordinate Zn(2+): Glu184, His247, and His264.

It belongs to the sugar phosphate cyclases superfamily. Dehydroquinate synthase family. It depends on Co(2+) as a cofactor. Requires Zn(2+) as cofactor. NAD(+) serves as cofactor.

The protein resides in the cytoplasm. The catalysed reaction is 7-phospho-2-dehydro-3-deoxy-D-arabino-heptonate = 3-dehydroquinate + phosphate. It participates in metabolic intermediate biosynthesis; chorismate biosynthesis; chorismate from D-erythrose 4-phosphate and phosphoenolpyruvate: step 2/7. In terms of biological role, catalyzes the conversion of 3-deoxy-D-arabino-heptulosonate 7-phosphate (DAHP) to dehydroquinate (DHQ). In Escherichia coli (strain K12 / MC4100 / BW2952), this protein is 3-dehydroquinate synthase.